A 302-amino-acid chain; its full sequence is Recombination-associated protein RdgC (302 aa).

Belongs to the RdgC family.

Its subcellular location is the cytoplasm. It localises to the nucleoid. Functionally, may be involved in recombination. The protein is Recombination-associated protein RdgC of Mannheimia succiniciproducens (strain KCTC 0769BP / MBEL55E).